We begin with the raw amino-acid sequence, 413 residues long: SET and MYND domain-containing protein DDB_G0273591 (413 aa).

Residues 6–311 (DGLKLSNSEL…KGDQINISYL (306 aa)) form the SET domain. The MYND-type zinc-finger motif lies at 51 to 95 (CYNCIKLIKSPSPQQVPRCFGCNEVWYCSEKCKQDNQAKHQHYEC). Residues 205–232 (DNNNNNNNNNNNNNNNNNNNNNNNNNNN) are disordered. A coiled-coil region spans residues 216 to 243 (NNNNNNNNNNNNNNNNNNNIEELIKLIR).

Belongs to the class V-like SAM-binding methyltransferase superfamily.

Probable methyltransferase. This Dictyostelium discoideum (Social amoeba) protein is SET and MYND domain-containing protein DDB_G0273591.